We begin with the raw amino-acid sequence, 87 residues long: Small ribosomal subunit protein uS15c (87 aa).

The protein belongs to the universal ribosomal protein uS15 family. As to quaternary structure, part of the 30S ribosomal subunit.

Its subcellular location is the plastid. It is found in the chloroplast. This Nicotiana tabacum (Common tobacco) protein is Small ribosomal subunit protein uS15c (rps15).